The sequence spans 320 residues: Olfactory receptor 10J1 (320 aa).

The Extracellular segment spans residues methionine 1 to isoleucine 36. N-linked (GlcNAc...) asparagine glycosylation is found at asparagine 9 and asparagine 16. The helical transmembrane segment at threonine 37–valine 57 threads the bilayer. Topologically, residues threonine 58–histidine 65 are cytoplasmic. Residues leucine 66–leucine 86 form a helical membrane-spanning segment. Topologically, residues valine 87–threonine 110 are extracellular. An intrachain disulfide couples cysteine 108 to cysteine 199. A helical membrane pass occupies residues glutamine 111–tyrosine 131. Residues aspartate 132–arginine 150 lie on the Cytoplasmic side of the membrane. The chain crosses the membrane as a helical span at residues leucine 151–valine 171. Over threonine 172–isoleucine 207 the chain is Extracellular. Residues leucine 208–serine 227 form a helical membrane-spanning segment. Over tyrosine 228–alanine 247 the chain is Cytoplasmic. A helical transmembrane segment spans residues phenylalanine 248–alanine 268. Residues tyrosine 269–aspartate 281 lie on the Extracellular side of the membrane. A helical membrane pass occupies residues glutamine 282–leucine 302. The Cytoplasmic segment spans residues arginine 303–serine 320.

The protein belongs to the G-protein coupled receptor 1 family.

Its subcellular location is the cell membrane. Odorant receptor. This is Olfactory receptor 10J1 (OR10J1) from Homo sapiens (Human).